The chain runs to 256 residues: Ubiquinone/menaquinone biosynthesis C-methyltransferase UbiE (256 aa).

Positions 1–12 (MNDQRKGEHAEP) are enriched in basic and acidic residues. A disordered region spans residues 1 to 21 (MNDQRKGEHAEPTTHFGYQDV). Residues Thr-79, Asp-100, and 128–129 (DA) each bind S-adenosyl-L-methionine.

This sequence belongs to the class I-like SAM-binding methyltransferase superfamily. MenG/UbiE family.

The enzyme catalyses a 2-demethylmenaquinol + S-adenosyl-L-methionine = a menaquinol + S-adenosyl-L-homocysteine + H(+). It catalyses the reaction a 2-methoxy-6-(all-trans-polyprenyl)benzene-1,4-diol + S-adenosyl-L-methionine = a 5-methoxy-2-methyl-3-(all-trans-polyprenyl)benzene-1,4-diol + S-adenosyl-L-homocysteine + H(+). It participates in quinol/quinone metabolism; menaquinone biosynthesis; menaquinol from 1,4-dihydroxy-2-naphthoate: step 2/2. Its pathway is cofactor biosynthesis; ubiquinone biosynthesis. Its function is as follows. Methyltransferase required for the conversion of demethylmenaquinol (DMKH2) to menaquinol (MKH2) and the conversion of 2-polyprenyl-6-methoxy-1,4-benzoquinol (DDMQH2) to 2-polyprenyl-3-methyl-6-methoxy-1,4-benzoquinol (DMQH2). In Pseudomonas putida (strain W619), this protein is Ubiquinone/menaquinone biosynthesis C-methyltransferase UbiE.